Reading from the N-terminus, the 218-residue chain is uncharacterized protein (218 aa).

The region spanning 4–207 is the CN hydrolase domain; it reads WKVAAAQYEP…SLLLVGQRSS (204 aa).

This is an uncharacterized protein from Escherichia coli (strain K12).